A 140-amino-acid polypeptide reads, in one-letter code: Ribosome maturation factor RimP (140 aa).

This sequence belongs to the RimP family.

The protein resides in the cytoplasm. Required for maturation of 30S ribosomal subunits. The chain is Ribosome maturation factor RimP from Campylobacter fetus subsp. fetus (strain 82-40).